Here is a 267-residue protein sequence, read N- to C-terminus: 2-keto-3-deoxy-L-rhamnonate aldolase (267 aa).

The active-site Proton acceptor is the His49. Gln151 serves as a coordination point for substrate. Glu153 lines the Mg(2+) pocket. Ala178 and Asp179 together coordinate substrate. Asp179 is a binding site for Mg(2+).

The protein belongs to the HpcH/HpaI aldolase family. KDR aldolase subfamily. Homohexamer. It depends on Mg(2+) as a cofactor. Requires Ni(2+) as cofactor.

It catalyses the reaction 2-dehydro-3-deoxy-L-rhamnonate = (S)-lactaldehyde + pyruvate. It carries out the reaction D-glyceraldehyde + 3-hydroxypyruvate = (3R,4S,5R)-3,4,5,6-tetrahydroxy-2-oxohexanoate. The catalysed reaction is D-glyceraldehyde + 3-hydroxypyruvate = 2-dehydro-D-gluconate. The enzyme catalyses D-glyceraldehyde + 3-hydroxypyruvate = 2-dehydro-D-galactonate. It catalyses the reaction D-glyceraldehyde + pyruvate = 2-dehydro-3-deoxy-L-galactonate. It carries out the reaction 2-dehydro-3-deoxy-D-gluconate = D-glyceraldehyde + pyruvate. Its function is as follows. Catalyzes the reversible retro-aldol cleavage of 2-keto-3-deoxy-L-rhamnonate (KDR) to pyruvate and lactaldehyde. 2-keto-3-deoxy-L-mannonate, 2-keto-3-deoxy-L-lyxonate and 4-hydroxy-2-ketoheptane-1,7-dioate (HKHD) are also reasonably good substrates, although 2-keto-3-deoxy-L-rhamnonate is likely to be the physiological substrate. In vitro, can catalyze the aldolisation reaction between hydroxypyruvate (HPA) or pyruvate (PA) and D-glyceraldehyde (D-GA). The condensation of hydroxypyruvate and D-glyceraldehyde produces (3R,4S,5R)-3,4,5,6-tetrahydroxy-2-oxohexanoate as the major product, 2-dehydro-D-gluconate and 2-dehydro-D-galactonate. The condensation of pyruvate and D-glyceraldehyde produces 2-dehydro-3-deoxy-L-galactonate as the major product and 2-dehydro-3-deoxy-D-gluconate. This is 2-keto-3-deoxy-L-rhamnonate aldolase (rhmA) from Escherichia coli (strain K12).